We begin with the raw amino-acid sequence, 332 residues long: Methionyl-tRNA formyltransferase (332 aa).

124-127 serves as a coordination point for (6S)-5,6,7,8-tetrahydrofolate; sequence SLLP.

The protein belongs to the Fmt family.

It carries out the reaction L-methionyl-tRNA(fMet) + (6R)-10-formyltetrahydrofolate = N-formyl-L-methionyl-tRNA(fMet) + (6S)-5,6,7,8-tetrahydrofolate + H(+). Attaches a formyl group to the free amino group of methionyl-tRNA(fMet). The formyl group appears to play a dual role in the initiator identity of N-formylmethionyl-tRNA by promoting its recognition by IF2 and preventing the misappropriation of this tRNA by the elongation apparatus. The chain is Methionyl-tRNA formyltransferase from Polynucleobacter necessarius subsp. necessarius (strain STIR1).